We begin with the raw amino-acid sequence, 304 residues long: DCN1-like protein 3 (304 aa).

2 disordered regions span residues Met-1 to Ser-87 and Glu-284 to Thr-304. Gly-2 carries N-myristoyl glycine lipidation. The 193-residue stretch at Ser-86–Met-278 folds into the DCUN1 domain.

As to quaternary structure, part of a complex containing DCUN1D3, CUL3 and RBX1. Interacts (via the DCUN1 domain) with the unneddylated cullins: interacts with CUL1, CUL2, CUL3, CUL4A, CUL4B and CUL5; these interactions promote the cullin neddylation and the identity of the cullin dictates the affinity of the interaction. Interacts preferentially with CUL3; this interaction triggers the relocalization of CUL3 to the cell membrane where CUL3 is neddylated. Interacts (via DCUN1 domain) with RBX1. May also interact with regulators or subunits of cullin-RING ligases such as RNF7, ELOB and DDB1; these interactions are bridged by cullins. Interacts (via DCUN1 domain) with CAND1; this interaction is bridged by cullins and strongly inhibits cullin neddylation. These CAND-cullin-DCNL complexes can only be neddylated in the presence of a substrate adapter. Interacts (via DCUN1 domain) with the N-terminally acetylated form of UBE2M and UBE2F.

The protein localises to the cell membrane. It localises to the cytoplasm. Its subcellular location is the nucleus. It is found in the perinuclear region. Contributes to the neddylation of all cullins by transferring NEDD8 from N-terminally acetylated NEDD8-conjugating E2s enzyme to different cullin C-terminal domain-RBX complexes and may play a role in the cell cycle progression by regulating the SCF ubiquitin E3 ligase complex, after UV damage. At the cell membrane, can promote and as well inhibit cullins neddylation. The polypeptide is DCN1-like protein 3 (Bos taurus (Bovine)).